Here is a 316-residue protein sequence, read N- to C-terminus: 1-aminocyclopropane-1-carboxylate oxidase 4 (316 aa).

A Fe2OG dioxygenase domain is found at 153–253 (PNFGTKVSNY…RMSLASFYNP (101 aa)). His-177, Asp-179, and His-234 together coordinate Fe cation.

The protein belongs to the iron/ascorbate-dependent oxidoreductase family. Fe cation is required as a cofactor. Expressed in all of the floral organs examined apart from the sepals.

It catalyses the reaction 1-aminocyclopropane-1-carboxylate + L-ascorbate + O2 = ethene + L-dehydroascorbate + hydrogen cyanide + CO2 + 2 H2O. It functions in the pathway alkene biosynthesis; ethylene biosynthesis via S-adenosyl-L-methionine; ethylene from S-adenosyl-L-methionine: step 2/2. The sequence is that of 1-aminocyclopropane-1-carboxylate oxidase 4 (ACO4) from Solanum lycopersicum (Tomato).